The sequence spans 1185 residues: DNA-directed RNA polymerase subunit beta' (1185 aa).

Cys-60, Cys-62, Cys-75, and Cys-78 together coordinate Zn(2+). Mg(2+) is bound by residues Asp-449, Asp-451, and Asp-453. Zn(2+) is bound by residues Cys-774, Cys-853, Cys-860, and Cys-863.

It belongs to the RNA polymerase beta' chain family. In terms of assembly, the RNAP catalytic core consists of 2 alpha, 1 beta, 1 beta' and 1 omega subunit. When a sigma factor is associated with the core the holoenzyme is formed, which can initiate transcription. Mg(2+) serves as cofactor. Zn(2+) is required as a cofactor.

It carries out the reaction RNA(n) + a ribonucleoside 5'-triphosphate = RNA(n+1) + diphosphate. Its function is as follows. DNA-dependent RNA polymerase catalyzes the transcription of DNA into RNA using the four ribonucleoside triphosphates as substrates. The polypeptide is DNA-directed RNA polymerase subunit beta' (Desulforamulus reducens (strain ATCC BAA-1160 / DSM 100696 / MI-1) (Desulfotomaculum reducens)).